Consider the following 540-residue polypeptide: CTP synthase (540 aa).

Residues 1–273 form an amidoligase domain region; the sequence is MNNKDLKTKF…DDFILQHFKL (273 aa). Position 19 (serine 19) interacts with CTP. Serine 19 is a binding site for UTP. Position 20-25 (20-25) interacts with ATP; that stretch reads SLGKGI. Tyrosine 60 provides a ligand contact to L-glutamine. An ATP-binding site is contributed by aspartate 77. Residues aspartate 77 and glutamate 147 each contribute to the Mg(2+) site. CTP contacts are provided by residues 154 to 156, 194 to 199, and lysine 230; these read DIE and KTKPTQ. Residues 194-199 and lysine 230 contribute to the UTP site; that span reads KTKPTQ. Residues 306 to 539 form the Glutamine amidotransferase type-1 domain; it reads YIVLHDAYLS…VEASLLNQKN (234 aa). Residue glycine 361 coordinates L-glutamine. Residue cysteine 388 is the Nucleophile; for glutamine hydrolysis of the active site. Residues 389–392, glutamate 412, and arginine 466 each bind L-glutamine; that span reads LGMQ. Catalysis depends on residues histidine 512 and glutamate 514.

This sequence belongs to the CTP synthase family. Homotetramer.

It catalyses the reaction UTP + L-glutamine + ATP + H2O = CTP + L-glutamate + ADP + phosphate + 2 H(+). The enzyme catalyses L-glutamine + H2O = L-glutamate + NH4(+). The catalysed reaction is UTP + NH4(+) + ATP = CTP + ADP + phosphate + 2 H(+). The protein operates within pyrimidine metabolism; CTP biosynthesis via de novo pathway; CTP from UDP: step 2/2. Its activity is regulated as follows. Allosterically activated by GTP, when glutamine is the substrate; GTP has no effect on the reaction when ammonia is the substrate. The allosteric effector GTP functions by stabilizing the protein conformation that binds the tetrahedral intermediate(s) formed during glutamine hydrolysis. Inhibited by the product CTP, via allosteric rather than competitive inhibition. Catalyzes the ATP-dependent amination of UTP to CTP with either L-glutamine or ammonia as the source of nitrogen. Regulates intracellular CTP levels through interactions with the four ribonucleotide triphosphates. The sequence is that of CTP synthase from Onion yellows phytoplasma (strain OY-M).